A 204-amino-acid chain; its full sequence is Facilitator of iron transport 3 (204 aa).

A signal peptide spans 1–18 (MKFSSALVLSAVAATALA). Disordered stretches follow at residues 84-104 (SAAE…SGSS) and 133-175 (EGSS…SSTA). Residues 135–175 (SSNTWSPSSTSTSSEAATSSASTTATTTAETSSSATSSSTA) are compositionally biased toward low complexity. The GPI-anchor amidated glycine moiety is linked to residue Gly-182. A propeptide spans 183 to 204 (AADAITAGTGLMGAALAAVMLL) (removed in mature form).

Post-translationally, the GPI-anchor is attached to the protein in the endoplasmic reticulum and serves to target the protein to the cell surface. There, the glucosamine-inositol phospholipid moiety is cleaved off and the GPI-modified mannoprotein is covalently attached via its lipidless GPI glycan remnant to the 1,6-beta-glucan of the outer cell wall layer.

It is found in the secreted. It localises to the cell wall. The protein resides in the membrane. Functionally, involved in the uptake of non-siderophore and siderophore sources of iron. Has a role in the retention of iron in the cell wall and periplasmic space. In Saccharomyces cerevisiae (strain ATCC 204508 / S288c) (Baker's yeast), this protein is Facilitator of iron transport 3 (FIT3).